Reading from the N-terminus, the 169-residue chain is Ribosome maturation factor RimP (169 aa).

The protein belongs to the RimP family.

It localises to the cytoplasm. Required for maturation of 30S ribosomal subunits. The sequence is that of Ribosome maturation factor RimP from Pseudomonas putida (strain W619).